The primary structure comprises 350 residues: Guanine nucleotide-binding protein G(t) subunit alpha (350 aa).

Positions 1-21 (MGAGASAEEKHSRELEKKLKE) are disordered. Gly2 carries N-myristoyl glycine lipidation. The span at 7-21 (AEEKHSRELEKKLKE) shows a compositional bias: basic and acidic residues. Positions 28–350 (RTVKLLLLGA…KENLKDCGLF (323 aa)) constitute a G-alpha domain. The segment at 31 to 44 (KLLLLGAGESGKST) is G1 motif. Residues 36 to 43 (GAGESGKS), 171 to 177 (LRSRVKT), 196 to 200 (DVGGQ), 265 to 268 (NKKD), and Ala322 contribute to the GTP site. Residues Ser43 and Thr177 each coordinate Mg(2+). The tract at residues 169 to 177 (DVLRSRVKT) is G2 motif. Residues 192-201 (FRMFDVGGQR) form a G3 motif region. A G4 motif region spans residues 261–268 (VLFLNKKD). The interval 320-325 (TCATDT) is G5 motif.

This sequence belongs to the G-alpha family. G(i/o/t/z) subfamily. As to quaternary structure, g proteins are composed of 3 units; alpha, beta and gamma. The alpha chain contains the guanine nucleotide binding site.

In terms of biological role, guanine nucleotide-binding proteins (G proteins) are involved as modulators or transducers in various transmembrane signaling systems. Transducin is an amplifier and one of the transducers of a visual impulse that performs the coupling between rhodopsin and cGMP-phosphodiesterase. In Xenopus laevis (African clawed frog), this protein is Guanine nucleotide-binding protein G(t) subunit alpha (gnat).